The chain runs to 175 residues: MPTPADDLVVIGKIVSVYGIRGEVKVYSFTDPLDNLLDYRRWTLRRDGEIRQAELVRGRLHGKVLAAKLKGLDDREEARTFTGYEICIPRSELPSLEEGEYYWHQLEGLKVIDQGRQLLGVIDHLLETGANDVMVVKPCAGSLDDRERLLPYTGQCVLSIDLAAGEMRVDWDADF.

Residues 98-175 (EGEYYWHQLE…EMRVDWDADF (78 aa)) enclose the PRC barrel domain.

The protein belongs to the RimM family. As to quaternary structure, binds ribosomal protein uS19.

It localises to the cytoplasm. Its function is as follows. An accessory protein needed during the final step in the assembly of 30S ribosomal subunit, possibly for assembly of the head region. Essential for efficient processing of 16S rRNA. May be needed both before and after RbfA during the maturation of 16S rRNA. It has affinity for free ribosomal 30S subunits but not for 70S ribosomes. The polypeptide is Ribosome maturation factor RimM (Pseudomonas aeruginosa (strain ATCC 15692 / DSM 22644 / CIP 104116 / JCM 14847 / LMG 12228 / 1C / PRS 101 / PAO1)).